Consider the following 1155-residue polypeptide: MSQLNAYIGRAGTGKSHAMLDEIKTKMKQDPLGDPIIIIAPTQSTFQLEQDFVKDPELNGSLRTEVLHFERLSHRIFQEIGGLTEEYASKGALEMMIFDILQSHRSELNLYQSQTKYYGFSAKLSEQIQDFKKYAVSPEQLEQFISENPLQTRTQDKLHDIALVYRHLEERLADNFVSSEDTLYKFIEKMDESKWLKRAEIYIDGFHNFSTLEYQIIEKLAQCAKSVSILLTTNGDKDPFSLFRKTSSTLTHIEEIAQRQNIDFNLRRFTKQERFENRDLSHLEHSFNEVFFDKAAAEGNINILETSNVREEVNAIARDIIRKAREENIRFQDVAVLYRDETYAHLMESVFPEFDIPFNIDTKKSMTHHPVMEMIRSLLEVIESKWSFEPLMRLFKTQVLTKKFKDNRYLTDILENYVLERGIYGQRWLDDKYFKIEQFNLMGLKRQPMTEETEADYQRVIDLKNYVIDKILRFEKALAEADTAETYAAAFYEAFEQFNLPSQLMTERDELDLAGEHQQAEELDQVWNGFIQTLDDLATVFGNREMTQKRFLELFDVGLEQLEFVMIPQTLDQVSIGSMDLAKVDNKKHIYMLGMNDGTMPQAISNSGLISDDEKKYFQEETQLELSPTADVLQMDEAFVCYIAMTRASTHVTFSYSLMGLNNDDKEVSPFIQNIRDLYTNLDVLNVQYAAQHNPLTVMEHPHQTKIALFEELQSWLNHELTAETWLEAYQAMLHNERLSRGLQYLTSALTFDNKTIQLNQSLSKALYGDKINASVSRFEGYQQCPFKHYTSHGLRLNERTKYKLENFDLGDIFHSVLKYIADKIHGDFRNLTDASIRKLTQEALENILPEVQYNLLNSSAYYRYMSVRIGAIVQSTLTALKYQGTFSKFRPQAFEKSFRKNPKSNEQLAAESLYTSQGISINIRGQIDRIDTFNSKDRSFVNIIDYKSSGYSGTLDLTKVYYGLQMQMMTYMDVVLQNKERLNLAETTEPGGLLYFHVHEPRVNFANWAEMDEDKRQEELLKSFKLNGLINSDPEVLDAEDTRLEPKFKSDIVPIDVGAKGNLNKSSKVADSQTIYKFIEHNKNNFIQIASDIMDGHTQVAPMKYKQKLPCEYCNYRSVCHVDGMIDSKKYRTVDESINPIDLLNQESDEDDEE.

Residues methionine 1–arginine 278 form the UvrD-like helicase ATP-binding domain. Glycine 9–serine 16 serves as a coordination point for ATP. One can recognise a UvrD-like helicase C-terminal domain in the interval threonine 270 to valine 584. Positions 785, 1112, 1115, and 1121 each coordinate [4Fe-4S] cluster.

This sequence belongs to the helicase family. AddB/RexB type 1 subfamily. In terms of assembly, heterodimer of AddA and AddB. Mg(2+) is required as a cofactor. Requires [4Fe-4S] cluster as cofactor.

In terms of biological role, the heterodimer acts as both an ATP-dependent DNA helicase and an ATP-dependent, dual-direction single-stranded exonuclease. Recognizes the chi site generating a DNA molecule suitable for the initiation of homologous recombination. The AddB subunit has 5' -&gt; 3' nuclease activity but not helicase activity. The protein is ATP-dependent helicase/deoxyribonuclease subunit B of Staphylococcus carnosus (strain TM300).